Reading from the N-terminus, the 1502-residue chain is Rho GTPase-activating protein 5 (1502 aa).

4 FF domains span residues 267-325 (QLVV…HIEQ), 366-420 (KLME…HVQH), 427-481 (RVEM…HQRE), and 482-548 (IVEK…HIGF). Tyr550 bears the 3'-nitrotyrosine mark. 2 positions are modified to phosphoserine: Ser590 and Ser765. The region spanning 590–763 (STNIDKVNLF…LESVKHNLDV (174 aa)) is the pG1 pseudoGTPase domain. One can recognise a pG2 pseudoGTPase domain in the interval 779 to 944 (RIVMCAMCGD…FSDVLEKKNM (166 aa)). Residues Ser951 and Ser968 each carry the phosphoserine modification. Disordered stretches follow at residues 975–1004 (YNNY…LPTP), 1022–1050 (HSTP…PKTN), and 1069–1089 (NPRK…DPSD). The span at 1036-1045 (VPPPIKPKPV) shows a compositional bias: pro residues. At Ser1115 the chain carries Phosphoserine. Disordered regions lie at residues 1125–1156 (FVNN…YKYK) and 1168–1254 (YRRT…TRRN). Positions 1140–1150 (RTSKSHGERRP) are enriched in basic and acidic residues. Phosphoserine is present on residues Ser1173, Ser1176, Ser1195, Ser1202, and Ser1218. Positions 1262–1449 (MPLQDLVTAE…TFIQQCQFFF (188 aa)) constitute a Rho-GAP domain.

In terms of assembly, may interact with RASA1/p120GAP. As to expression, detected in skin fibroblasts (at protein level).

It localises to the cytoplasm. Its subcellular location is the cell membrane. Its function is as follows. GTPase-activating protein for Rho family members. This chain is Rho GTPase-activating protein 5 (ARHGAP5), found in Homo sapiens (Human).